Reading from the N-terminus, the 316-residue chain is Ornithine carbamoyltransferase (316 aa).

Carbamoyl phosphate-binding positions include 57-60, glutamine 84, arginine 108, and 135-138; these read STRT and HPCQ. Residues asparagine 166, aspartate 230, and 234–235 contribute to the L-ornithine site; that span reads SM. Residues 269 to 270 and arginine 297 each bind carbamoyl phosphate; that span reads CL.

This sequence belongs to the aspartate/ornithine carbamoyltransferase superfamily. OTCase family.

It is found in the cytoplasm. The enzyme catalyses carbamoyl phosphate + L-ornithine = L-citrulline + phosphate + H(+). Its pathway is amino-acid degradation; L-arginine degradation via ADI pathway; carbamoyl phosphate from L-arginine: step 2/2. Functionally, reversibly catalyzes the transfer of the carbamoyl group from carbamoyl phosphate (CP) to the N(epsilon) atom of ornithine (ORN) to produce L-citrulline. The sequence is that of Ornithine carbamoyltransferase from Bacillus anthracis (strain CDC 684 / NRRL 3495).